A 770-amino-acid chain; its full sequence is Endothelin-converting enzyme 1 (770 aa).

Residues 1 to 68 (MRGVWPPPVS…WAARTQVEKR (68 aa)) are Cytoplasmic-facing. Threonine 25 is subject to Phosphothreonine. A helical; Signal-anchor for type II membrane protein membrane pass occupies residues 69–89 (LVVLVVLLAAGLVACLAALGI). Residues 90-770 (QYQTRSPSVC…MNPPHKCEVW (681 aa)) lie on the Extracellular side of the membrane. The region spanning 98 to 770 (VCLSEACVSV…MNPPHKCEVW (673 aa)) is the Peptidase M13 domain. 5 disulfides stabilise this stretch: cysteine 99-cysteine 104, cysteine 122-cysteine 755, cysteine 130-cysteine 715, cysteine 185-cysteine 435, and cysteine 644-cysteine 767. Residues asparagine 166, asparagine 187, asparagine 210, asparagine 270, asparagine 316, asparagine 362, asparagine 383, and asparagine 539 are each glycosylated (N-linked (GlcNAc...) asparagine). Histidine 607 contributes to the Zn(2+) binding site. Residue glutamate 608 is part of the active site. Histidine 611 serves as a coordination point for Zn(2+). 2 N-linked (GlcNAc...) asparagine glycosylation sites follow: asparagine 632 and asparagine 651. A Zn(2+)-binding site is contributed by glutamate 667. Aspartate 671 functions as the Proton donor in the catalytic mechanism.

Belongs to the peptidase M13 family. In terms of assembly, homodimer; disulfide-linked. Interacts with PPP1R16B. Interacts with TSPAN8; this interaction recruits the endothelin converting enzyme ECE1 to tetraspanin-enriched microdomains and positively modulates its enzymatic activity. Zn(2+) is required as a cofactor. As to expression, all isoforms are expressed in umbilical vein endothelial cells, polynuclear neutrophils, fibroblasts, atrium cardiomyocytes and ventricles. Isoforms A, B and C are also expressed in placenta, lung, heart, adrenal gland and phaeochromocytoma; isoforms A and C in liver, testis and small intestine; isoform B, C and D in endothelial cells and umbilical vein smooth muscle cells; isoforms C and D in saphenous vein cells, and isoform C in kidney.

The protein localises to the cell membrane. The enzyme catalyses Hydrolysis of the 21-Trp-|-Val-22 bond in big endothelin to form endothelin 1.. With respect to regulation, inhibited by phosphoramidon. Activated by K49-P1-20, a twenty-residue synthetic peptide shortened from the snake B.asper myotoxin II. Converts big endothelin-1 to endothelin-1. The protein is Endothelin-converting enzyme 1 (ECE1) of Homo sapiens (Human).